Here is a 310-residue protein sequence, read N- to C-terminus: Methionyl-tRNA formyltransferase (310 aa).

111–114 is a binding site for (6S)-5,6,7,8-tetrahydrofolate; the sequence is SILP.

It belongs to the Fmt family.

The catalysed reaction is L-methionyl-tRNA(fMet) + (6R)-10-formyltetrahydrofolate = N-formyl-L-methionyl-tRNA(fMet) + (6S)-5,6,7,8-tetrahydrofolate + H(+). Its function is as follows. Attaches a formyl group to the free amino group of methionyl-tRNA(fMet). The formyl group appears to play a dual role in the initiator identity of N-formylmethionyl-tRNA by promoting its recognition by IF2 and preventing the misappropriation of this tRNA by the elongation apparatus. This chain is Methionyl-tRNA formyltransferase, found in Finegoldia magna (strain ATCC 29328 / DSM 20472 / WAL 2508) (Peptostreptococcus magnus).